A 465-amino-acid chain; its full sequence is Gamma-aminobutyric acid receptor subunit gamma-1 (465 aa).

Residues 1–35 (MGPLKAFLFSPFLLRSQSRGVRLVFLLLTLHLGNC) form the signal peptide. Residues 36–273 (VDKADDEDDE…FDLSRRMGYF (238 aa)) lie on the Extracellular side of the membrane. 2 N-linked (GlcNAc...) asparagine glycosylation sites follow: Asn50 and Asn127. Cys188 and Cys202 are joined by a disulfide. Residue Asn245 is glycosylated (N-linked (GlcNAc...) asparagine). A helical transmembrane segment spans residues 274 to 294 (TIQTYIPCILTVVLSWVSFWI). The Cytoplasmic portion of the chain corresponds to 295 to 300 (NKDAVP). Residues 301–320 (ARTSLGITTVLTMTTLSTIA) traverse the membrane as a helical segment. Topologically, residues 321-328 (RKSLPKVS) are extracellular. The helical transmembrane segment at 329-349 (YVTAMDLFVSVCFIFVFAALM) threads the bilayer. The Cytoplasmic segment spans residues 350–444 (EYGTLHYFTS…RIAKIDSYSR (95 aa)). A helical transmembrane segment spans residues 445-465 (IFFPTAFALFNLVYWVGYLYL).

It belongs to the ligand-gated ion channel (TC 1.A.9) family. Gamma-aminobutyric acid receptor (TC 1.A.9.5) subfamily. GABRG1 sub-subfamily. Heteropentamer, formed by a combination of alpha (GABRA1-6), beta (GABRB1-3), gamma (GABRG1-3), delta (GABRD), epsilon (GABRE), rho (GABRR1-3), pi (GABRP) and theta (GABRQ) chains, each subunit exhibiting distinct physiological and pharmacological properties. May be palmitoylated.

Its subcellular location is the postsynaptic cell membrane. The protein localises to the cell membrane. The catalysed reaction is chloride(in) = chloride(out). Its function is as follows. Gamma subunit of the heteropentameric ligand-gated chloride channel gated by gamma-aminobutyric acid (GABA), a major inhibitory neurotransmitter in the brain. GABA-gated chloride channels, also named GABA(A) receptors (GABAAR), consist of five subunits arranged around a central pore and contain GABA active binding site(s) located at the alpha and beta subunit interface(s). When activated by GABA, GABAARs selectively allow the flow of chloride anions across the cell membrane down their electrochemical gradient. Chloride influx into the postsynaptic neuron following GABAAR opening decreases the neuron ability to generate a new action potential, thereby reducing nerve transmission. In Homo sapiens (Human), this protein is Gamma-aminobutyric acid receptor subunit gamma-1.